The primary structure comprises 180 residues: Large ribosomal subunit protein uL5 (180 aa).

The protein belongs to the universal ribosomal protein uL5 family. Part of the 50S ribosomal subunit; part of the 5S rRNA/L5/L18/L25 subcomplex. Contacts the 5S rRNA and the P site tRNA. Forms a bridge to the 30S subunit in the 70S ribosome.

Its function is as follows. This is one of the proteins that bind and probably mediate the attachment of the 5S RNA into the large ribosomal subunit, where it forms part of the central protuberance. In the 70S ribosome it contacts protein S13 of the 30S subunit (bridge B1b), connecting the 2 subunits; this bridge is implicated in subunit movement. Contacts the P site tRNA; the 5S rRNA and some of its associated proteins might help stabilize positioning of ribosome-bound tRNAs. The sequence is that of Large ribosomal subunit protein uL5 from Heliobacterium modesticaldum (strain ATCC 51547 / Ice1).